Consider the following 525-residue polypeptide: GMP synthase [glutamine-hydrolyzing] (525 aa).

The region spanning 7 to 207 (RILVIDFGSQ…ITCICRCKSS (201 aa)) is the Glutamine amidotransferase type-1 domain. Cysteine 84 (nucleophile) is an active-site residue. Residues histidine 181 and glutamate 183 contribute to the active site. One can recognise a GMPS ATP-PPase domain in the interval 208-400 (WKIANIIDDI…LGIPYDIAYR (193 aa)). An ATP-binding site is contributed by 235–241 (SGGIDSL).

As to quaternary structure, homodimer.

The catalysed reaction is XMP + L-glutamine + ATP + H2O = GMP + L-glutamate + AMP + diphosphate + 2 H(+). Its pathway is purine metabolism; GMP biosynthesis; GMP from XMP (L-Gln route): step 1/1. In terms of biological role, catalyzes the synthesis of GMP from XMP. The protein is GMP synthase [glutamine-hydrolyzing] of Blochmanniella pennsylvanica (strain BPEN).